A 1243-amino-acid polypeptide reads, in one-letter code: Protein MMS22-like (1243 aa).

The protein belongs to the MMS22 family. MMS22L subfamily. As to quaternary structure, component of the MMS22L-TONSL complex, a complex at least composed of MMS22L and TONSL/NFKBIL2. Interacts with RAD51; interaction is direct. Degraded by the ubiquitin-proteasome system upon replication stress.

Its subcellular location is the nucleus. The protein localises to the chromosome. In terms of biological role, component of the MMS22L-TONSL complex, a complex that promotes homologous recombination-mediated repair of double-strand breaks (DSBs) at stalled or collapsed replication forks. The MMS22L-TONSL complex is required to maintain genome integrity during DNA replication. It mediates the assembly of RAD51 filaments on single-stranded DNA (ssDNA): the MMS22L-TONSL complex is recruited to DSBs following histone replacement by histone chaperones and eviction of the replication protein A complex (RPA/RP-A) from DSBs. Following recruitment to DSBs, the TONSL-MMS22L complex promotes recruitment of RAD51 filaments and subsequent homologous recombination. Within the complex, MMS22L acts by binding ssDNA. This is Protein MMS22-like from Homo sapiens (Human).